A 49-amino-acid polypeptide reads, in one-letter code: Large ribosomal subunit protein bL33 (49 aa).

Belongs to the bacterial ribosomal protein bL33 family.

In Lactobacillus acidophilus (strain ATCC 700396 / NCK56 / N2 / NCFM), this protein is Large ribosomal subunit protein bL33.